Reading from the N-terminus, the 1704-residue chain is Type-2 histone deacetylase 2 (1704 aa).

3 disordered regions span residues 1–303, 315–383, and 540–634; these read MSTN…SEER, TQGS…TSKK, and QFLQ…IGNS. The segment covering 15-69 has biased composition (low complexity); sequence TTITNESNTDNNNNNNDDNKNNTENTTSPTNNNNTNDNDNNSDNNNNKNNNNNNS. The span at 70 to 81 shows a compositional bias: polar residues; that stretch reads QVTEEQQVTLED. Acidic residues predominate over residues 97–113; that stretch reads DSAEEDEDEMEDDDEDA. Positions 134–153 are enriched in polar residues; sequence KVQQSTNTHLSQTTPESPTI. Residues 165 to 176 show a composition bias toward low complexity; sequence STSTNNTPNTQS. The span at 186-195 shows a compositional bias: basic and acidic residues; sequence LTSDEEKDLM. Over residues 196 to 210 the composition is skewed to acidic residues; it reads LSEESDGGVGEDDDS. Residues 222–286 show a composition bias toward low complexity; sequence NQSNQNQNNN…SNNDNNNNNN (65 aa). The span at 315–325 shows a compositional bias: polar residues; that stretch reads TQGSSTTTSDP. Residues 326–351 are compositionally biased toward low complexity; the sequence is NNQNNQINQINQNNQNNQNNQNNQNN. The span at 354 to 369 shows a compositional bias: acidic residues; the sequence is GEEEFGEEFEEEEEDM. The span at 372 to 382 shows a compositional bias: basic residues; that stretch reads PKKKTKYKTSK. Composition is skewed to low complexity over residues 540 to 549 and 561 to 580; these read QFLQQQQQQQ and NSNNSNNNNNNNSNNNNNNS. Residues 608–620 show a composition bias toward basic and acidic residues; the sequence is YETRKYTKKRNDE. Asp-1165 and Gly-1227 together coordinate substrate. Positions 1256, 1258, and 1350 each coordinate a divalent metal cation. The disordered stretch occupies residues 1485–1704; the sequence is QLERQKQLQQ…TPQNINNSDN (220 aa). Positions 1491 to 1616 are enriched in low complexity; the sequence is QLQQQQQQAQ…NNSNNNNNMN (126 aa). The segment covering 1649–1669 has biased composition (polar residues); that stretch reads LSPNSVNRGNNPSNISMSGAQ. Positions 1677 to 1698 are enriched in low complexity; sequence SPKPSNSPNSPSTSNNNGTPQN.

This sequence belongs to the histone deacetylase family. HD type 2 subfamily.

It is found in the nucleus. It localises to the cytoplasm. The catalysed reaction is N(6)-acetyl-L-lysyl-[histone] + H2O = L-lysyl-[histone] + acetate. Responsible for the deacetylation of lysine residues on the N-terminal part of the core histones (H2A, H2B, H3 and H4). Histone deacetylation plays an important role in transcriptional regulation, cell cycle progression and developmental events. Histone deacetylases act via the formation of large multiprotein complexes. The protein is Type-2 histone deacetylase 2 (hdaC) of Dictyostelium discoideum (Social amoeba).